Consider the following 237-residue polypeptide: Ribitol-5-phosphate cytidylyltransferase (237 aa).

Residues 7–10 (LAGG), 81–87 (GSDRNES), and serine 112 each bind CTP.

It belongs to the IspD/TarI cytidylyltransferase family. TarI subfamily.

It catalyses the reaction D-ribitol 5-phosphate + CTP + H(+) = CDP-L-ribitol + diphosphate. The protein operates within cell wall biogenesis; poly(ribitol phosphate) teichoic acid biosynthesis. In terms of biological role, catalyzes the transfer of the cytidylyl group of CTP to D-ribitol 5-phosphate. In Bacillus spizizenii (strain ATCC 23059 / NRRL B-14472 / W23) (Bacillus subtilis subsp. spizizenii), this protein is Ribitol-5-phosphate cytidylyltransferase.